The primary structure comprises 721 residues: Peroxisomal fatty acid beta-oxidation multifunctional protein AIM1 (721 aa).

The active-site Nucleophile is the E116. Residue E136 is the Proton acceptor of the active site. The Microbody targeting signal motif lies at 719–721; it reads SKL.

In the N-terminal section; belongs to the enoyl-CoA hydratase/isomerase family. It in the central section; belongs to the 3-hydroxyacyl-CoA dehydrogenase family. Widely expressed.

The protein resides in the peroxisome. The catalysed reaction is a (3S)-3-hydroxyacyl-CoA = a (2E)-enoyl-CoA + H2O. It catalyses the reaction a 4-saturated-(3S)-3-hydroxyacyl-CoA = a (3E)-enoyl-CoA + H2O. It carries out the reaction (3S)-3-hydroxybutanoyl-CoA = (2E)-butenoyl-CoA + H2O. The enzyme catalyses (3S)-hydroxyoctanoyl-CoA = (2E)-octenoyl-CoA + H2O. The catalysed reaction is (3S)-3-hydroxydodecanoyl-CoA = (2E)-dodecenoyl-CoA + H2O. It catalyses the reaction (3S)-hydroxytetradecanoyl-CoA = (2E)-tetradecenoyl-CoA + H2O. It carries out the reaction (3S)-hydroxyhexanoyl-CoA = (2E)-hexenoyl-CoA + H2O. The enzyme catalyses a (3Z)-enoyl-CoA = a 4-saturated (2E)-enoyl-CoA. The catalysed reaction is a (3E)-enoyl-CoA = a 4-saturated (2E)-enoyl-CoA. It catalyses the reaction (3S)-3-hydroxybutanoyl-CoA = (3R)-3-hydroxybutanoyl-CoA. It carries out the reaction a (3S)-3-hydroxyacyl-CoA + NAD(+) = a 3-oxoacyl-CoA + NADH + H(+). The enzyme catalyses (3S)-3-hydroxybutanoyl-CoA + NAD(+) = acetoacetyl-CoA + NADH + H(+). The catalysed reaction is (3S)-hydroxyhexanoyl-CoA + NAD(+) = 3-oxohexanoyl-CoA + NADH + H(+). It catalyses the reaction (3S)-hydroxyoctanoyl-CoA + NAD(+) = 3-oxooctanoyl-CoA + NADH + H(+). It carries out the reaction (3S)-3-hydroxydodecanoyl-CoA + NAD(+) = 3-oxododecanoyl-CoA + NADH + H(+). The enzyme catalyses (3S)-hydroxytetradecanoyl-CoA + NAD(+) = 3-oxotetradecanoyl-CoA + NADH + H(+). Its pathway is lipid metabolism; fatty acid beta-oxidation. In terms of biological role, involved in peroxisomal fatty acid beta-oxidation. Required for wound-induced jasmonate biosynthesis. Possesses enoyl-CoA hydratase activity against short chain substrates (C4-C6) and 3-hydroxyacyl-CoA dehydrogenase activity against chains of variable sizes (C6-C16). Possesses cinnamoyl-CoA hydratase activity and is involved in the peroxisomal beta-oxidation pathway for the biosynthesis of benzoic acid (BA). Required for the accumulation in seeds of benzoylated glucosinolates (BGs) and substituted hydroxybenzoylated choline esters, which are BA-containing secondary metabolites. Required for salicylic acid (SA) in seeds. The sequence is that of Peroxisomal fatty acid beta-oxidation multifunctional protein AIM1 (AIM1) from Arabidopsis thaliana (Mouse-ear cress).